Reading from the N-terminus, the 334-residue chain is Protein-methionine-sulfoxide reductase catalytic subunit MsrP (334 aa).

Residues 1–44 (MKKNQFLKESDVTAESVFFMKRRQVLKALGISAAAFSLPHAAHA) constitute a signal peptide (tat-type signal). Mo-molybdopterin contacts are provided by residues Asn-88, 91 to 92 (YE), Cys-146, Thr-181, Asn-233, Arg-238, and 249 to 251 (GIK).

This sequence belongs to the MsrP family. As to quaternary structure, heterodimer of a catalytic subunit (MsrP) and a heme-binding subunit (MsrQ). Mo-molybdopterin is required as a cofactor. In terms of processing, predicted to be exported by the Tat system. The position of the signal peptide cleavage has not been experimentally proven.

The protein localises to the periplasm. It carries out the reaction L-methionyl-[protein] + a quinone + H2O = L-methionyl-(S)-S-oxide-[protein] + a quinol. The enzyme catalyses L-methionyl-[protein] + a quinone + H2O = L-methionyl-(R)-S-oxide-[protein] + a quinol. In terms of biological role, part of the MsrPQ system that repairs oxidized periplasmic proteins containing methionine sulfoxide residues (Met-O), using respiratory chain electrons. Thus protects these proteins from oxidative-stress damage caused by reactive species of oxygen and chlorine generated by the host defense mechanisms. MsrPQ is essential for the maintenance of envelope integrity under bleach stress, rescuing a wide series of structurally unrelated periplasmic proteins from methionine oxidation, including the primary periplasmic chaperone SurA and the lipoprotein Pal. The catalytic subunit MsrP is non-stereospecific, being able to reduce both (R-) and (S-) diastereoisomers of methionine sulfoxide. In Escherichia coli O6:H1 (strain CFT073 / ATCC 700928 / UPEC), this protein is Protein-methionine-sulfoxide reductase catalytic subunit MsrP.